The primary structure comprises 268 residues: Indole-3-glycerol phosphate synthase 2 (268 aa).

Belongs to the TrpC family.

The enzyme catalyses 1-(2-carboxyphenylamino)-1-deoxy-D-ribulose 5-phosphate + H(+) = (1S,2R)-1-C-(indol-3-yl)glycerol 3-phosphate + CO2 + H2O. The protein operates within amino-acid biosynthesis; L-tryptophan biosynthesis; L-tryptophan from chorismate: step 4/5. The polypeptide is Indole-3-glycerol phosphate synthase 2 (trpC2) (Ralstonia nicotianae (strain ATCC BAA-1114 / GMI1000) (Ralstonia solanacearum)).